Here is a 182-residue protein sequence, read N- to C-terminus: Probable RNA 2'-phosphotransferase (182 aa).

Belongs to the KptA/TPT1 family.

In terms of biological role, removes the 2'-phosphate from RNA via an intermediate in which the phosphate is ADP-ribosylated by NAD followed by a presumed transesterification to release the RNA and generate ADP-ribose 1''-2''-cyclic phosphate (APPR&gt;P). May function as an ADP-ribosylase. This is Probable RNA 2'-phosphotransferase from Pseudomonas aeruginosa (strain UCBPP-PA14).